Reading from the N-terminus, the 127-residue chain is MWIWYSLLFFGVCHLAHSTSTVDDALTCHGEKLAEEVLNELKEHFGPHWEEKVPELIEKLNAIGENLQLEKNEDKPSIGGNPWENTDMMLRFKWKKVLHKVGHVAGKIAIGAASNIAAKAVMGALGK.

A signal peptide spans Met1 to Ser18.

Expressed by the venom gland (anterior main gland) (at protein level).

The protein resides in the secreted. The chain is Venom protein family 16 protein 1 from Platymeris rhadamanthus (Red spot assassin bug).